Reading from the N-terminus, the 860-residue chain is Transcription factor E2F8 (860 aa).

2 disordered regions span residues 1–27 (MENQKENLFSEPHKRGLMKSPLHPSSK) and 38–57 (DLGPLTTPTKPKEVSQGEPW). 2 positions are modified to phosphoserine: S71 and S102. 2 DNA-binding regions span residues 113–182 (RKEK…TWHG) and 261–347 (RKDK…KWTG). 3 disordered regions span residues 407 to 433 (RRKISSAPSSPVKSNKAESSQNSPPVP), 532 to 616 (LTPP…PKED), and 745 to 803 (QMSA…QPVP). S412 and S416 each carry phosphoserine. Composition is skewed to polar residues over residues 412-429 (SAPSSPVKSNKAESSQNS) and 542-554 (VCPTQPSNATGSK). Positions 555–565 (DPTDAPAEKTA) are enriched in basic and acidic residues.

This sequence belongs to the E2F/DP family. As to quaternary structure, interacts with HIF1A. Homodimer and heterodimer: mainly forms homodimers and, to a lesser extent, heterodimers with E2F8. Dimerization is important for DNA-binding. As to expression, highly expressed in liver, skin, thymus and testis. Expressed in trophoblast giant cells throughout placenta development (at protein level).

It localises to the nucleus. Its function is as follows. Atypical E2F transcription factor that participates in various processes such as angiogenesis and polyploidization of specialized cells. Mainly acts as a transcription repressor that binds DNA independently of DP proteins and specifically recognizes the E2 recognition site 5'-TTTC[CG]CGC-3'. Directly represses transcription of classical E2F transcription factors such as E2F1: component of a feedback loop in S phase by repressing the expression of E2F1, thereby preventing p53/TP53-dependent apoptosis. Plays a key role in polyploidization of cells in placenta and liver by regulating the endocycle, probably by repressing genes promoting cytokinesis and antagonizing action of classical E2F proteins (E2F1, E2F2 and/or E2F3). Required for placental development by promoting polyploidization of trophoblast giant cells. Acts as a promoter of sprouting angiogenesis, possibly by acting as a transcription activator: associates with HIF1A, recognizes and binds the VEGFA promoter, which is different from canonical E2 recognition site, and activates expression of the VEGFA gene. The polypeptide is Transcription factor E2F8 (E2f8) (Mus musculus (Mouse)).